Reading from the N-terminus, the 359-residue chain is Acetoin catabolism protein X (359 aa).

Its subcellular location is the cell membrane. Its pathway is ketone degradation; acetoin degradation. Its function is as follows. Essential for acetoin catabolism. The polypeptide is Acetoin catabolism protein X (acoX) (Cupriavidus necator (strain ATCC 17699 / DSM 428 / KCTC 22496 / NCIMB 10442 / H16 / Stanier 337) (Ralstonia eutropha)).